We begin with the raw amino-acid sequence, 137 residues long: Large ribosomal subunit protein eL28 (137 aa).

Position 2 is an N-acetylserine (serine 2). Residues lysine 58 and lysine 65 each participate in a glycyl lysine isopeptide (Lys-Gly) (interchain with G-Cter in SUMO2) cross-link. At serine 115 the chain carries Phosphoserine.

Belongs to the eukaryotic ribosomal protein eL28 family. As to quaternary structure, component of the large ribosomal subunit.

Its subcellular location is the cytoplasm. In terms of biological role, component of the large ribosomal subunit. The ribosome is a large ribonucleoprotein complex responsible for the synthesis of proteins in the cell. In Oryctolagus cuniculus (Rabbit), this protein is Large ribosomal subunit protein eL28 (RPL28).